The chain runs to 930 residues: Translation initiation factor IF-2 (930 aa).

Positions 50-67 are enriched in low complexity; sequence FKPAAAPKVEAKPAAPKV. Disordered stretches follow at residues 50–217 and 260–346; these read FKPA…SSEE and EVVP…HELP. 2 stretches are compositionally biased toward basic and acidic residues: residues 68–90 and 110–125; these read SAEK…EAKP and FKAE…AERR. The segment covering 129 to 141 has biased composition (low complexity); that stretch reads KGNNRDQQQNGNR. Basic and acidic residues-rich tracts occupy residues 157-167 and 262-295; these read RDNRRFNDQAK and VPEK…DGPR. A compositionally biased stretch (low complexity) spans 309–318; that stretch reads NQKNSNWNNN. A compositionally biased stretch (basic and acidic residues) spans 337-346; sequence VTERKFHELP. The region spanning 432–599 is the tr-type G domain; sequence ERPPVVTIMG…TVLLVAEIQE (168 aa). Residues 441–448 are G1; that stretch reads GHVDHGKT. 441-448 contributes to the GTP binding site; it reads GHVDHGKT. Residues 466-470 form a G2 region; that stretch reads GITQH. Residues 487–490 are G3; that stretch reads DTPG. GTP-binding positions include 487–491 and 541–544; these read DTPGH and NKID. The segment at 541-544 is G4; sequence NKID. Positions 577-579 are G5; sequence SAK.

The protein belongs to the TRAFAC class translation factor GTPase superfamily. Classic translation factor GTPase family. IF-2 subfamily.

Its subcellular location is the cytoplasm. Functionally, one of the essential components for the initiation of protein synthesis. Protects formylmethionyl-tRNA from spontaneous hydrolysis and promotes its binding to the 30S ribosomal subunits. Also involved in the hydrolysis of GTP during the formation of the 70S ribosomal complex. In Streptococcus pneumoniae (strain Taiwan19F-14), this protein is Translation initiation factor IF-2.